Consider the following 470-residue polypeptide: 3-isopropylmalate dehydratase large subunit (470 aa).

Residues 294–307 (PDQNTGISGSTPNP) show a composition bias toward polar residues. Residues 294–313 (PDQNTGISGSTPNPSDAADD) are disordered. Cysteine 347, cysteine 407, and cysteine 410 together coordinate [4Fe-4S] cluster.

It belongs to the aconitase/IPM isomerase family. LeuC type 1 subfamily. Heterodimer of LeuC and LeuD. [4Fe-4S] cluster serves as cofactor.

It catalyses the reaction (2R,3S)-3-isopropylmalate = (2S)-2-isopropylmalate. Its pathway is amino-acid biosynthesis; L-leucine biosynthesis; L-leucine from 3-methyl-2-oxobutanoate: step 2/4. Its function is as follows. Catalyzes the isomerization between 2-isopropylmalate and 3-isopropylmalate, via the formation of 2-isopropylmaleate. This chain is 3-isopropylmalate dehydratase large subunit, found in Akkermansia muciniphila (strain ATCC BAA-835 / DSM 22959 / JCM 33894 / BCRC 81048 / CCUG 64013 / CIP 107961 / Muc).